Here is a 296-residue protein sequence, read N- to C-terminus: NH(3)-dependent NAD(+) synthetase (296 aa).

ATP is bound at residue 30 to 37 (GVSGGLDS). Asp-36 serves as a coordination point for Mg(2+). Residue Arg-157 participates in deamido-NAD(+) binding. Glu-182 is a Mg(2+) binding site. Positions 190 and 197 each coordinate deamido-NAD(+). The ATP site is built by Lys-206 and Ser-228.

This sequence belongs to the NAD synthetase family. Homodimer.

It carries out the reaction deamido-NAD(+) + NH4(+) + ATP = AMP + diphosphate + NAD(+) + H(+). It participates in cofactor biosynthesis; NAD(+) biosynthesis; NAD(+) from deamido-NAD(+) (ammonia route): step 1/1. In terms of biological role, catalyzes the ATP-dependent amidation of deamido-NAD to form NAD. Uses ammonia as a nitrogen source. This is NH(3)-dependent NAD(+) synthetase from Coprothermobacter proteolyticus (strain ATCC 35245 / DSM 5265 / OCM 4 / BT).